The primary structure comprises 440 residues: MGDLELLLPGEAEVLVQGLHSFQLREMGSEGWSKQHENLEKLNMQAILDATVSQAEPIQELLVTHGKIPTLVEELIAVEMWKQKVFPVLCRLEDFKPQNTFPIYMVVHHEASIINLLETVFFHKEVCESADDTVLDLVDYCHRKLILLVARKGGGDLSEEERFQDSTPMQELQKQAEMMEFEISLKALSVLRYITDCMDSLSLSTLNRMLTTHNLPCLLVELLEHSPWSRREGGKLQHFESGRWQTVAPSEHQKLNKLDGQVWIALYNLLLSPEARTRYCLTNFAKGQLLKLQAFLTDTLLDQLPNLADLKSFLAHLALVETQPPKKDLVLEQIPEIWDRLERENKGKWQAIAKHQLQHVFSLSEKDLRQQAQRWAETYRLDVLEAVAPERPRCAYCSAEASKRCSRCQKVWYCCRECQVKHWEKHGKTCVLAAQGDRAK.

Zn(2+) is bound by residues C394, C397, C405, C408, C414, C418, H426, and C430. The segment at 394–430 (CAYCSAEASKRCSRCQKVWYCCRECQVKHWEKHGKTC) adopts an MYND-type zinc-finger fold.

It belongs to the ZMYND10 family. As to quaternary structure, interacts (via C-terminus) with DNAAF11 (via CS domain); this interaction stabilizes DNAAF11 at the protein level. Interacts (via C-terminus) with DNAL1; this interaction stabilizes DNAL1 at the protein level. Interacts with DNAAF4, HSPA8, IQUB, RUVBL2 and DYNTL5.

Its subcellular location is the cytoplasm. It localises to the cytoskeleton. It is found in the microtubule organizing center. The protein localises to the centrosome. The protein resides in the centriolar satellite. Its subcellular location is the apical cell membrane. It localises to the dynein axonemal particle. Plays a role in axonemal structure organization and motility. Involved in axonemal pre-assembly of inner and outer dynein arms (IDA and ODA, respectively) for proper axoneme building for cilia motility. May act by indirectly regulating transcription of dynein proteins. The polypeptide is Zinc finger MYND domain-containing protein 10 (Zmynd10) (Rattus norvegicus (Rat)).